The chain runs to 393 residues: NAD(P)H-quinone oxidoreductase subunit H, chloroplastic (393 aa).

The protein belongs to the complex I 49 kDa subunit family. As to quaternary structure, NDH is composed of at least 16 different subunits, 5 of which are encoded in the nucleus.

It is found in the plastid. The protein resides in the chloroplast thylakoid membrane. The enzyme catalyses a plastoquinone + NADH + (n+1) H(+)(in) = a plastoquinol + NAD(+) + n H(+)(out). It carries out the reaction a plastoquinone + NADPH + (n+1) H(+)(in) = a plastoquinol + NADP(+) + n H(+)(out). Functionally, NDH shuttles electrons from NAD(P)H:plastoquinone, via FMN and iron-sulfur (Fe-S) centers, to quinones in the photosynthetic chain and possibly in a chloroplast respiratory chain. The immediate electron acceptor for the enzyme in this species is believed to be plastoquinone. Couples the redox reaction to proton translocation, and thus conserves the redox energy in a proton gradient. This Zygnema circumcarinatum (Green alga) protein is NAD(P)H-quinone oxidoreductase subunit H, chloroplastic.